The primary structure comprises 2453 residues: Tyrosine-protein phosphatase non-receptor type 13 (2453 aa).

The KIND domain maps to 3–190 (VSLAEALEVR…SGTDPLSRSS (188 aa)). The tract at residues 183–227 (TDPLSRSSEQKPDRSQAIRDRLRGKGLPTGRSSTSDALDTHEAPL) is disordered. Positions 190-205 (SEQKPDRSQAIRDRLR) are enriched in basic and acidic residues. Ser-240 is modified (phosphoserine). Positions 253 to 285 (EDYLKDTPSDNNSRHEDSETFSSPYQFKTSTPQ) are disordered. A compositionally biased stretch (basic and acidic residues) spans 256–270 (LKDTPSDNNSRHEDS). A compositionally biased stretch (polar residues) spans 272-285 (TFSSPYQFKTSTPQ). 2 positions are modified to phosphoserine: Ser-297 and Ser-298. A disordered region spans residues 429 to 457 (SEASKRFESSSGLPGVDETGQTRPSRQYE). Residues 447–457 (TGQTRPSRQYE) are compositionally biased toward polar residues. The stretch at 458 to 493 (TSLEGNLINQDIMLRRQEEEMMQLQARMALRQSRLS) forms a coiled coil. The 301-residue stretch at 565-865 (RKVNIRLLSG…SQHKFQLQMR (301 aa)) folds into the FERM domain. Phosphoserine is present on residues Ser-883, Ser-890, Ser-901, Ser-904, and Ser-907. Positions 944–957 (KEKTDKASWEEKPR) are enriched in basic and acidic residues. Disordered regions lie at residues 944 to 966 (KEKTDKASWEEKPRGMSKSYHDL) and 1007 to 1063 (LAGL…VPFK). Phosphoserine occurs at positions 1021 and 1025. Positions 1025–1034 (SPERRNHESD) are enriched in basic and acidic residues. Positions 1049-1058 (SLPSSGKSSS) are enriched in low complexity. The residue at position 1076 (Ser-1076) is a Phosphoserine. In terms of domain architecture, PDZ 1 spans 1084-1170 (LVNLKKDPKH…DVTLVISQPK (87 aa)). 2 disordered regions span residues 1199-1356 (DSAM…GDTF) and 1441-1478 (GQVPTSRERDPAGPQSPPPDQDAQRQAPEKVAKQTPHV). Phosphoserine is present on Ser-1221. 2 stretches are compositionally biased toward polar residues: residues 1242-1252 (ESASLSQSQVN) and 1267-1279 (PQHSSPSPSVTTK). Ser-1270 carries the phosphoserine modification. The span at 1297–1315 (GISDLIEHLDCADSDKDDS) shows a compositional bias: basic and acidic residues. Residues 1331–1341 (SSSLSTSNKTS) show a composition bias toward low complexity. The region spanning 1357–1442 (EVELAKTDGS…VVHLLLEKGQ (86 aa)) is the PDZ 2 domain. Residues 1467-1478 (APEKVAKQTPHV) show a composition bias toward basic and acidic residues. Residues 1491-1579 (EVKLFKNSSG…EVSLLLCRPA (89 aa)) enclose the PDZ 3 domain. A compositionally biased stretch (polar residues) spans 1602–1629 (LNSSKETSQPSSSVEQGASSDDNGVSGK). Disordered stretches follow at residues 1602–1662 (LNSS…AKMP) and 1695–1726 (KLESESSHPPPLDVSPGQTCQPPAECAPSDAT). Residues 1638 to 1655 (SRRESYSDHSESGEDDSV) show a composition bias toward basic and acidic residues. 2 PDZ domains span residues 1764–1845 (LITL…GRIL) and 1857–1942 (LPDI…TRDG). Disordered regions lie at residues 1991–2024 (EAVCPAGEGSSSQMKESAGLTETKESNSRDDDIY) and 2051–2139 (RHAT…DPPF). Over residues 2012–2021 (ETKESNSRDD) the composition is skewed to basic and acidic residues. The region spanning 2180–2434 (PSKELENLQE…VFCYQVILYV (255 aa)) is the Tyrosine-protein phosphatase domain. Substrate-binding positions include Asp-2345, 2375-2381 (CSAGIGR), and Gln-2419. Residue Cys-2375 is the Phosphocysteine intermediate of the active site.

This sequence belongs to the protein-tyrosine phosphatase family. Non-receptor class subfamily. In terms of assembly, interacts (via the first PDZ domain) with PLEKHA1 and PLEKHA2. Interacts (via the second PDZ domain) with TNFRSF6 (Fas receptor) (via C-terminus). Interacts (via the second PDZ domain) with TRIP6 (via the third LIM domain and C-terminus). Interacts (via the third PDZ domain) with NGFR (via C-terminal SVP motif) and PKN2 (via C-terminus). Interacts (via the second or fourth PDZ domains) with PDLIM4 (via C-terminus only or via combined C-terminus and LIM domain, but not LIM domain only). Found in a complex with PDLIM4 and TRIP6. Interacts with PDLIM4; this interaction results in dephosphorylation of SRC 'Tyr-419' by this protein leading to its inactivation. Interacts with BRD7. Interacts with RAPGEF6. Interacts with ARHGAP29. Interacts with PIK3R2; dephosphorylates PIK3R2. Interacts with FBXL2. Interacts (via the FERM domain) with ENTR1. Found in a complex with ENTR1, PTPN13 and GIT1. As to expression, expressed predominantly in kidney and, to a lesser extent, in lung, heart, brain and testis.

The protein resides in the cytoplasm. The protein localises to the cytoskeleton. It localises to the nucleus. It is found in the cell projection. Its subcellular location is the lamellipodium. It carries out the reaction O-phospho-L-tyrosyl-[protein] + H2O = L-tyrosyl-[protein] + phosphate. Tyrosine phosphatase which negatively regulates FAS-induced apoptosis and NGFR-mediated pro-apoptotic signaling. May regulate phosphoinositide 3-kinase (PI3K) signaling through dephosphorylation of PIK3R2. This is Tyrosine-protein phosphatase non-receptor type 13 (Ptpn13) from Mus musculus (Mouse).